The chain runs to 320 residues: ATP-dependent 6-phosphofructokinase (320 aa).

Residue Gly-12 coordinates ATP. ADP is bound at residue Arg-22–Arg-26. ATP contacts are provided by residues Arg-73–Phe-74 and Gly-103–Ser-106. A Mg(2+)-binding site is contributed by Asp-104. Residue Thr-126–Asp-128 participates in substrate binding. Asp-128 serves as the catalytic Proton acceptor. ADP is bound at residue Arg-155. Residues Arg-163 and Met-170–Arg-172 contribute to the substrate site. ADP contacts are provided by residues Gly-186–Glu-188, Lys-212, and Lys-214–His-216. Residues Glu-223, Arg-244, and His-250–Arg-253 each bind substrate.

The protein belongs to the phosphofructokinase type A (PFKA) family. ATP-dependent PFK group I subfamily. Prokaryotic clade 'B1' sub-subfamily. In terms of assembly, homotetramer. Requires Mg(2+) as cofactor.

The protein localises to the cytoplasm. It catalyses the reaction beta-D-fructose 6-phosphate + ATP = beta-D-fructose 1,6-bisphosphate + ADP + H(+). The protein operates within carbohydrate degradation; glycolysis; D-glyceraldehyde 3-phosphate and glycerone phosphate from D-glucose: step 3/4. With respect to regulation, allosterically activated by ADP and other diphosphonucleosides, and allosterically inhibited by phosphoenolpyruvate. In terms of biological role, catalyzes the phosphorylation of D-fructose 6-phosphate to fructose 1,6-bisphosphate by ATP, the first committing step of glycolysis. The chain is ATP-dependent 6-phosphofructokinase from Photobacterium profundum (strain SS9).